We begin with the raw amino-acid sequence, 266 residues long: Putative pyruvate, phosphate dikinase regulatory protein (266 aa).

Residue 149 to 156 (GVSRTSKT) coordinates ADP.

It belongs to the pyruvate, phosphate/water dikinase regulatory protein family. PDRP subfamily.

It catalyses the reaction N(tele)-phospho-L-histidyl/L-threonyl-[pyruvate, phosphate dikinase] + ADP = N(tele)-phospho-L-histidyl/O-phospho-L-threonyl-[pyruvate, phosphate dikinase] + AMP + H(+). The catalysed reaction is N(tele)-phospho-L-histidyl/O-phospho-L-threonyl-[pyruvate, phosphate dikinase] + phosphate + H(+) = N(tele)-phospho-L-histidyl/L-threonyl-[pyruvate, phosphate dikinase] + diphosphate. In terms of biological role, bifunctional serine/threonine kinase and phosphorylase involved in the regulation of the pyruvate, phosphate dikinase (PPDK) by catalyzing its phosphorylation/dephosphorylation. The sequence is that of Putative pyruvate, phosphate dikinase regulatory protein from Halothermothrix orenii (strain H 168 / OCM 544 / DSM 9562).